We begin with the raw amino-acid sequence, 367 residues long: Alginate lyase (367 aa).

The first 24 residues, 1 to 24 (MTIFKRISSPALLALALFGGAAHA), serve as a signal peptide directing secretion. Residues 63-64 (SK), 136-137 (HT), and Tyr-254 contribute to the substrate site.

This sequence belongs to the polysaccharide lyase 5 family.

It is found in the periplasm. It catalyses the reaction Eliminative cleavage of alginate to give oligosaccharides with 4-deoxy-alpha-L-erythro-hex-4-enuronosyl groups at their non-reducing ends and beta-D-mannuronate at their reducing end.. Its function is as follows. Catalyzes the depolymerization of alginate by cleaving the beta-1,4 glycosidic bond between two adjacent sugar residues via a beta-elimination mechanism. May serve to degrade mislocalized alginate that is trapped in the periplasmic space. The protein is Alginate lyase of Pseudomonas putida (strain ATCC 700007 / DSM 6899 / JCM 31910 / BCRC 17059 / LMG 24140 / F1).